The primary structure comprises 204 residues: Small ribosomal subunit protein eS8 (204 aa).

Belongs to the eukaryotic ribosomal protein eS8 family.

The protein is Small ribosomal subunit protein eS8 (RPS8) of Griffithsia japonica (Red alga).